Consider the following 214-residue polypeptide: Probable GTP-binding protein EngB (214 aa).

One can recognise an EngB-type G domain in the interval 30–204; sequence EGFEVAFAGR…YTVLAGWMEL (175 aa). GTP is bound by residues 38-45, 64-68, 82-85, 149-152, and 182-185; these read GRSNAGKS, GRTQL, DLPG, TKAD, and LFSA. The Mg(2+) site is built by S45 and T66.

The protein belongs to the TRAFAC class TrmE-Era-EngA-EngB-Septin-like GTPase superfamily. EngB GTPase family. Requires Mg(2+) as cofactor.

Necessary for normal cell division and for the maintenance of normal septation. The sequence is that of Probable GTP-binding protein EngB from Pseudomonas fluorescens (strain Pf0-1).